The primary structure comprises 76 residues: uncharacterized protein (76 aa).

This is an uncharacterized protein from Escherichia coli (strain K12).